Consider the following 693-residue polypeptide: Heat shock protein homolog SSE2 (693 aa).

Residues 653–693 form a disordered region; sequence LRANQETSKMNDIAEKLAEQRRARAASDDSDDNNDENMDLD. Basic and acidic residues predominate over residues 664 to 679; sequence DIAEKLAEQRRARAAS. The segment covering 680 to 693 has biased composition (acidic residues); it reads DDSDDNNDENMDLD.

Belongs to the heat shock protein 70 family.

Its function is as follows. Has a calcium-dependent calmodulin-binding activity. This Saccharomyces cerevisiae (strain ATCC 204508 / S288c) (Baker's yeast) protein is Heat shock protein homolog SSE2 (SSE2).